We begin with the raw amino-acid sequence, 161 residues long: Cyclic pyranopterin monophosphate synthase (161 aa).

Substrate contacts are provided by residues 75 to 77 (LCH) and 113 to 114 (ME). Residue Asp-128 is part of the active site.

Belongs to the MoaC family. As to quaternary structure, homohexamer; trimer of dimers.

It catalyses the reaction (8S)-3',8-cyclo-7,8-dihydroguanosine 5'-triphosphate = cyclic pyranopterin phosphate + diphosphate. It functions in the pathway cofactor biosynthesis; molybdopterin biosynthesis. Its function is as follows. Catalyzes the conversion of (8S)-3',8-cyclo-7,8-dihydroguanosine 5'-triphosphate to cyclic pyranopterin monophosphate (cPMP). This Thioalkalivibrio sulfidiphilus (strain HL-EbGR7) protein is Cyclic pyranopterin monophosphate synthase.